The sequence spans 155 residues: Endoribonuclease YbeY (155 aa).

Positions 110, 114, and 120 each coordinate Zn(2+).

Belongs to the endoribonuclease YbeY family. It depends on Zn(2+) as a cofactor.

It localises to the cytoplasm. Single strand-specific metallo-endoribonuclease involved in late-stage 70S ribosome quality control and in maturation of the 3' terminus of the 16S rRNA. This Deinococcus radiodurans (strain ATCC 13939 / DSM 20539 / JCM 16871 / CCUG 27074 / LMG 4051 / NBRC 15346 / NCIMB 9279 / VKM B-1422 / R1) protein is Endoribonuclease YbeY.